Reading from the N-terminus, the 677-residue chain is Galactocerebrosidase (677 aa).

The signal sequence occupies residues 1–33 (MGTVPAGSRRAPGCGEGMFILCLALLLAPGAPA). Substrate-binding residues include Thr-101, Trp-143, and Asn-189. Catalysis depends on Glu-190, which acts as the Proton donor/acceptor. Glu-265 serves as the catalytic Nucleophile. The cysteines at positions 278 and 385 are disulfide-linked. 3 N-linked (GlcNAc...) asparagine glycosylation sites follow: Asn-291, Asn-370, and Asn-381. Substrate is bound at residue Arg-387. Asn-394, Asn-399, Asn-424, Asn-441, Asn-509, Asn-549, and Asn-630 each carry an N-linked (GlcNAc...) asparagine glycan.

This sequence belongs to the glycosyl hydrolase 59 family.

Its subcellular location is the lysosome. It catalyses the reaction a beta-D-galactosyl-(1&lt;-&gt;1')-N-acylsphing-4-enine + H2O = an N-acylsphing-4-enine + D-galactose. It carries out the reaction beta-D-galactosyl-(1&lt;-&gt;1)-sphing-4-enine + H2O = sphing-4-enine + D-galactose. The enzyme catalyses a D-galactosylceramide + H2O = an N-acyl-sphingoid base + D-galactose. Hydrolyzes the galactose ester bonds of glycolipids such as galactosylceramide and galactosylsphingosine. The polypeptide is Galactocerebrosidase (Xenopus laevis (African clawed frog)).